Consider the following 162-residue polypeptide: Phenazine biosynthesis protein PhzB1 (162 aa).

It belongs to the PhzA/PhzB family. As to quaternary structure, homodimer.

It participates in antibiotic biosynthesis; phenazine biosynthesis. Involved in the biosynthesis of the antibiotic phenazine, a nitrogen-containing heterocyclic molecule. PhzB1 (operon phzA1B1C1E1F1G1) has a role in the biosynthesis of the phenazine during planktonic growth. The polypeptide is Phenazine biosynthesis protein PhzB1 (Pseudomonas aeruginosa (strain ATCC 15692 / DSM 22644 / CIP 104116 / JCM 14847 / LMG 12228 / 1C / PRS 101 / PAO1)).